Consider the following 245-residue polypeptide: Probable ABC transporter permease protein HI_0355 (245 aa).

A run of 6 helical transmembrane segments spans residues 9-29, 61-81, 92-112, 115-135, 170-190, and 217-237; these read LLIVGVLLMIWQMVATLGSFP, ICLGLLLGFLFGLISALLLSF, ILVISQAIPVFAIAPLLVLWF, GMASKIVMSVLIIYFPVTAAC, LPAFASGLRIAVSVAPIGAVV, and FAALLILVSISLCLYFSIDWL. Positions 50–234 constitute an ABC transmembrane type-1 domain; that stretch reads LWQHTQVTLL…SISLCLYFSI (185 aa).

Belongs to the binding-protein-dependent transport system permease family. CysTW subfamily.

It localises to the cell inner membrane. In terms of biological role, probably part of a binding-protein-dependent transport system. Probably responsible for the translocation of the substrate across the membrane. This is Probable ABC transporter permease protein HI_0355 from Haemophilus influenzae (strain ATCC 51907 / DSM 11121 / KW20 / Rd).